The chain runs to 1018 residues: Importin-9 (1018 aa).

Residues 35–114 form the Importin N-terminal domain; that stretch reads TEKRIKQLEY…RNILPNGLYD (80 aa). A disordered region spans residues 921-950; that stretch reads GKSDEPLTDSEEDGDDEDAPGNPDKPRYIS. A compositionally biased stretch (acidic residues) spans 926–939; the sequence is PLTDSEEDGDDEDA.

This sequence belongs to the importin beta family.

It localises to the cytoplasm. The protein resides in the nucleus. Nuclear transport receptor that mediates nuclear import of proteins. Serves as receptor for nuclear localization signals (NLS) in cargo substrates. Is thought to mediate docking of the importin/substrate complex to the nuclear pore complex (NPC) through binding to nucleoporin and the complex is subsequently translocated through the pore by an energy requiring, Ran-dependent mechanism. Mediates the import of pre-assembled proteasomes into the nucleus during the late stages of sperm development. The polypeptide is Importin-9 (Drosophila melanogaster (Fruit fly)).